Reading from the N-terminus, the 431-residue chain is Keratin, type I cytoskeletal 20 (431 aa).

The interval 1-23 (MDFSRQSFHRSLSSSSQGPALSM) is disordered. The tract at residues 1-76 (MDFSRQSFHR…SNGSDLFGGN (76 aa)) is head. Ser13 is modified (phosphoserine; by MAPKAPK2, MAPKAPK3 and PKC). A phosphoserine mark is found at Ser16 and Ser26. The coil 1A stretch occupies residues 77–112 (GKLAMQNLNDRLANYLEKVRSLEQSNSRLEAQIKQW). An IF rod domain is found at 77–388 (GKLAMQNLND…RLLEGEDIKT (312 aa)). Positions 113-130 (YETNAPSTIRDYSSYYAQ) are linker 1. The segment at 131–222 (IKELQNQVKD…KEHQEEVEVL (92 aa)) is coil 1B. The interval 223–245 (RRQLGNNVNVEVDAAPGLNLGEI) is linker 12. The segment at 246 to 384 (MNEMRQRYEV…ATYRRLLEGE (139 aa)) is coil 2. The interval 385 to 431 (DIKTTEYQLSTLEMKDIKKTRKIKTVVEEVVDGKVVSSEVKEIEESV) is tail.

Belongs to the intermediate filament family. As to quaternary structure, heterotetramer of two type I and two type II keratins. Associates with KRT8. In terms of processing, hyperphosphorylation at Ser-13 occurs during the early stages of apoptosis but becomes less prominent during the later stages. Phosphorylation at Ser-13 also increases in response to stress brought on by cell injury. Proteolytically cleaved by caspases during apoptosis. Cleavage occurs at Asp-235. Expressed at low levels in the more differentiated suprabasal regions of the small intestine, and at higher levels in the colon, mainly in the upper region and in scattered cells throughout the remaining epithelium. Also expressed in epithelial cells of bladder, ileum and stomach and at lower levels in pancreas and earskin. The phosphorylated form is nearly exclusively expressed in goblet cells of the small intestine and in the lumen-proximal cells of the colon (at protein level). Also expressed in jejunum and duodenum.

Its function is as follows. Plays a significant role in maintaining keratin filament organization in intestinal epithelia. When phosphorylated, plays a role in the secretion of mucin in the small intestine. This is Keratin, type I cytoskeletal 20 from Mus musculus (Mouse).